Consider the following 843-residue polypeptide: Protein P (843 aa).

Residues 1-177 form a terminal protein domain (TP) region; sequence MPLSYQHFRK…FCGSPYSWEQ (177 aa). A spacer region spans residues 178-346; it reads ELQHGRLVFQ…YCLTHIVNLL (169 aa). Disordered stretches follow at residues 224–273 and 288–316; these read GLQP…SSTS and HLSTSKRQSSSGHAVELHNIPPSSARSQS. Polar residues predominate over residues 288 to 299; sequence HLSTSKRQSSSG. The segment at 347–690 is polymerase/reverse transcriptase domain (RT); it reads EDWGPCTEHG…YLNLYPVARQ (344 aa). One can recognise a Reverse transcriptase domain in the interval 357–600; it reads EHNIRIPRTP…YSLNFMGYVI (244 aa). Residues Asp-429, Asp-551, and Asp-552 each contribute to the Mg(2+) site.

This sequence belongs to the hepadnaviridae P protein family.

It carries out the reaction DNA(n) + a 2'-deoxyribonucleoside 5'-triphosphate = DNA(n+1) + diphosphate. The catalysed reaction is Endonucleolytic cleavage to 5'-phosphomonoester.. Its activity is regulated as follows. Activated by host HSP70 and HSP40 in vitro to be able to bind the epsilon loop of the pgRNA. Because deletion of the RNase H region renders the protein partly chaperone-independent, the chaperones may be needed indirectly to relieve occlusion of the RNA-binding site by this domain. Inhibited by several reverse-transcriptase inhibitors: Lamivudine, Adefovir and Entecavir. In terms of biological role, multifunctional enzyme that converts the viral RNA genome into dsDNA in viral cytoplasmic capsids. This enzyme displays a DNA polymerase activity that can copy either DNA or RNA templates, and a ribonuclease H (RNase H) activity that cleaves the RNA strand of RNA-DNA heteroduplexes in a partially processive 3'- to 5'-endonucleasic mode. Neo-synthesized pregenomic RNA (pgRNA) are encapsidated together with the P protein, and reverse-transcribed inside the nucleocapsid. Initiation of reverse-transcription occurs first by binding the epsilon loop on the pgRNA genome, and is initiated by protein priming, thereby the 5'-end of (-)DNA is covalently linked to P protein. Partial (+)DNA is synthesized from the (-)DNA template and generates the relaxed circular DNA (RC-DNA) genome. After budding and infection, the RC-DNA migrates in the nucleus, and is converted into a plasmid-like covalently closed circular DNA (cccDNA). The activity of P protein does not seem to be necessary for cccDNA generation, and is presumably released from (+)DNA by host nuclear DNA repair machinery. The polypeptide is Protein P (Homo sapiens (Human)).